A 470-amino-acid chain; its full sequence is GDP-Man:Man(3)GlcNAc(2)-PP-Dol alpha-1,2-mannosyltransferase (470 aa).

The Lumenal portion of the chain corresponds to 1-15 (MSDTVISLISHSITT). A helical transmembrane segment spans residues 16 to 36 (VFYLVPLIIALIIPFSLYSGF). Residues 37–131 (RRKSKTVAFF…HYKHCTMLFQ (95 aa)) are Cytoplasmic-facing. The segment at residues 132-152 (ALAGLILALEAWFRMVPAVFI) is an intramembrane region (helical). At 153-378 (DSMGYPLSLP…ISIHTMHNEH (226 aa)) the chain is on the cytoplasmic side. Positions 379-399 (FGISVVEAMAASTIILSNDSG) form an intramembrane region, helical. The Cytoplasmic segment spans residues 400-470 (GPRMDIVKDY…HWNKEIEKVL (71 aa)).

It belongs to the glycosyltransferase group 1 family. Glycosyltransferase 4 subfamily.

The protein localises to the endoplasmic reticulum membrane. It catalyses the reaction an alpha-D-Man-(1-&gt;3)-[alpha-D-Man-(1-&gt;6)]-beta-D-Man-(1-&gt;4)-beta-D-GlcNAc-(1-&gt;4)-alpha-D-GlcNAc-diphospho-di-trans,poly-cis-dolichol + 2 GDP-alpha-D-mannose = an alpha-D-Man-(1-&gt;2)-alpha-D-Man-(1-&gt;2)-alpha-D-Man-(1-&gt;3)-[alpha-D-Man-(1-&gt;6)]-beta-D-Man-(1-&gt;4)-beta-D-GlcNAc-(1-&gt;4)-alpha-D-GlcNAc-diphospho-di-trans,poly-cis-dolichol + 2 GDP + 2 H(+). It participates in protein modification; protein glycosylation. Functionally, GDP-Man:Man(3)GlcNAc(2)-PP-Dol alpha-1,2-mannosyltransferase that operates in the biosynthetic pathway of dolichol-linked oligosaccharides, the glycan precursors employed in protein asparagine (N)-glycosylation. The assembly of dolichol-linked oligosaccharides begins on the cytosolic side of the endoplasmic reticulum membrane and finishes in its lumen. The sequential addition of sugars to dolichol pyrophosphate produces dolichol-linked oligosaccharides containing fourteen sugars, including two GlcNAcs, nine mannoses and three glucoses. Once assembled, the oligosaccharide is transferred from the lipid to nascent proteins by oligosaccharyltransferases. Catalyzes, on the cytoplasmic face of the endoplasmic reticulum, the addition of the fourth and fifth mannose residues to the dolichol-linked oligosaccharide chain, to produce Man(5)GlcNAc(2)-PP-dolichol core oligosaccharide. Man(5)GlcNAc(2)-PP-dolichol is a substrate for ALG3, the following enzyme in the biosynthetic pathway. This Caenorhabditis elegans protein is GDP-Man:Man(3)GlcNAc(2)-PP-Dol alpha-1,2-mannosyltransferase.